The chain runs to 1818 residues: Integrin beta-4 (1818 aa).

The first 28 residues, 1–28, serve as a signal peptide directing secretion; the sequence is MAGPCCSPWVKLLLLAAMLSASLPGDLA. Residues 29–712 are Extracellular-facing; the sequence is NRCKKAQVKS…HKKKDCPPGS (684 aa). Positions 30–74 constitute a PSI domain; it reads RCKKAQVKSCTECIRVDKSCAYCTDELFKERRCNTQAELLAAGCR. Disulfide bonds link Cys31–Cys49, Cys39–Cys457, Cys42–Cys62, Cys52–Cys73, Cys246–Cys289, Cys459–Cys478, Cys470–Cys481, and Cys483–Cys492. Residues 132-310 enclose the VWFA domain; that stretch reads DLYILMDFSN…KTQDYPSVPT (179 aa). Residues Ser140 and Ser142 each coordinate Mg(2+). Ca(2+) is bound by residues Ser142, Asp145, Asp146, and Asp177. An involved in NRG1- and IGF1-binding region spans residues 195–200; the sequence is WPNSDP. The Ca(2+) site is built by Asn229, Asp231, Pro233, and Glu234. Glu234 provides a ligand contact to Mg(2+). An N-linked (GlcNAc...) asparagine glycan is attached at Asn328. Glu351 serves as a coordination point for Ca(2+). 4 I-EGF domains span residues 459–493, 494–539, 540–576, and 577–617; these read CELQ…KTCN, CSTG…HFCE, YDNF…RSCD, and CPLS…TTCE. The Cell attachment site signature appears at 473 to 475; that stretch reads RGD. N-linked (GlcNAc...) asparagine glycosylation is present at Asn493. 11 disulfides stabilise this stretch: Cys494-Cys522, Cys505-Cys520, Cys514-Cys525, Cys527-Cys538, Cys545-Cys559, Cys553-Cys564, Cys566-Cys575, Cys577-Cys600, Cys584-Cys598, Cys592-Cys603, and Cys605-Cys616. Asn581 carries an N-linked (GlcNAc...) asparagine glycan. N-linked (GlcNAc...) asparagine glycosylation is present at Asn619. 4 disulfides stabilise this stretch: Cys628/Cys673, Cys634/Cys653, Cys637/Cys650, and Cys682/Cys708. A glycan (N-linked (GlcNAc...) asparagine) is linked at Asn697. The chain crosses the membrane as a helical span at residues 713–733; it reads FWWLIPLLIFLLLLLALLLLL. The segment at 734–751 is palmitoylated on several cysteines; that stretch reads CWKYCACCKACLGLLPCC. Residues 734–1818 lie on the Cytoplasmic side of the membrane; it reads CWKYCACCKA…THMDQQFFQT (1085 aa). At Ser773 the chain carries Phosphoserine. One can recognise a Calx-beta domain in the interval 981 to 1086; sequence VNITIIKEQA…QVRRFQVQLS (106 aa). Positions 1005–1007 match the Cell attachment site motif; the sequence is RGD. A phosphoserine mark is found at Ser1071 and Ser1121. Residues 1115 to 1137 form a disordered region; the sequence is INQTLSSPPPPHGDLGAPQNPNA. 2 Fibronectin type-III domains span residues 1131-1220 and 1224-1323; these read APQN…THQE and EPGR…TQPK. The disordered stretch occupies residues 1402 to 1433; the sequence is LSASSGRSDEDGSVAGGVEGEGSGWIRGATPR. Residues 1415–1426 are compositionally biased toward gly residues; it reads VAGGVEGEGSGW. A phosphoserine mark is found at Ser1451, Ser1454, and Ser1470. A Phosphothreonine modification is found at Thr1483. Residue Ser1490 is modified to Phosphoserine. Phosphothreonine is present on Thr1526. Fibronectin type-III domains lie at 1526–1621 and 1639–1735; these read TPTR…VHPQ and APGP…SQVG. Residue Ser1787 is modified to Phosphoserine.

This sequence belongs to the integrin beta chain family. In terms of assembly, heterodimer of an alpha and a beta subunit. Beta-4 associates with alpha-6. Interacts (via cytoplasmic region) with COL17A1 (via cytoplasmic region). Interacts (via cytoplasmic region) with DST isoform 3 (via N-terminus). Interacts (via cytoplasmic domain) with DST (via N-terminus). Interacts with RAC1. ITGA6:ITGB4 is found in a ternary complex with NRG1 and ERBB3. ITGA6:ITGB4 is found in a ternary complex with IGF1 and IGF1R. ITGA6:ITGB4 interacts with IGF2. Interacts with TMEM268; this interaction prevents ITGB4 degradation. Post-translationally, palmitoylated by DHHC3 at several cysteines of the membrane-proximal region, enhancing stability and cell surface expression. Palmitoylation also promotes secondary association with tertaspanins.

The protein resides in the cell membrane. The protein localises to the cell junction. It localises to the hemidesmosome. Functionally, integrin alpha-6/beta-4 is a receptor for laminin. It plays a critical structural role in the hemidesmosome of epithelial cells. Is required for the regulation of keratinocyte polarity and motility. ITGA6:ITGB4 binds to NRG1 (via EGF domain) and this binding is essential for NRG1-ERBB signaling. ITGA6:ITGB4 binds to IGF1 and this binding is essential for IGF1 signaling. ITGA6:ITGB4 binds to IGF2 and this binding is essential for IGF2 signaling. This is Integrin beta-4 (Itgb4) from Mus musculus (Mouse).